Reading from the N-terminus, the 198-residue chain is Ribonuclease HII (198 aa).

In terms of domain architecture, RNase H type-2 spans 14–198 (GVIAGVDEVG…RNFAPISRAL (185 aa)). Positions 20, 21, and 112 each coordinate a divalent metal cation.

The protein belongs to the RNase HII family. Mn(2+) is required as a cofactor. It depends on Mg(2+) as a cofactor.

The protein resides in the cytoplasm. It carries out the reaction Endonucleolytic cleavage to 5'-phosphomonoester.. Its function is as follows. Endonuclease that specifically degrades the RNA of RNA-DNA hybrids. This is Ribonuclease HII from Wolbachia sp. subsp. Drosophila simulans (strain wRi).